A 208-amino-acid chain; its full sequence is Urease accessory protein UreG 1 (208 aa).

14–21 (GPVGSGKT) contacts GTP.

This sequence belongs to the SIMIBI class G3E GTPase family. UreG subfamily. Homodimer. UreD, UreF and UreG form a complex that acts as a GTP-hydrolysis-dependent molecular chaperone, activating the urease apoprotein by helping to assemble the nickel containing metallocenter of UreC. The UreE protein probably delivers the nickel.

The protein localises to the cytoplasm. Its function is as follows. Facilitates the functional incorporation of the urease nickel metallocenter. This process requires GTP hydrolysis, probably effectuated by UreG. In terms of biological role, disruption of the ure1 gene cluster suggests that it protects brucellae during their passage through the stomach. The major route of infection in human brucellosis is oral. The sequence is that of Urease accessory protein UreG 1 from Brucella abortus (strain 2308).